We begin with the raw amino-acid sequence, 105 residues long: MFAVIKTGGKQYRVAANDVLTIEKLEAAAGDSIEFTEVLVIGEGADAAIGAPFVTGASVKAEVVEQNRGKKVIAFKKRRRQNSKRSRGHRQHHTVVRITDIVAAK.

This sequence belongs to the bacterial ribosomal protein bL21 family. In terms of assembly, part of the 50S ribosomal subunit. Contacts protein L20.

Its function is as follows. This protein binds to 23S rRNA in the presence of protein L20. The polypeptide is Large ribosomal subunit protein bL21 (Rhizobium etli (strain CIAT 652)).